The sequence spans 139 residues: NADPH-dependent 7-cyano-7-deazaguanine reductase (139 aa).

Residue C34 is the Thioimide intermediate of the active site. D41 (proton donor) is an active-site residue. Substrate is bound by residues 56–58 and 75–76; these read VEL and HE.

This sequence belongs to the GTP cyclohydrolase I family. QueF type 1 subfamily.

Its subcellular location is the cytoplasm. It catalyses the reaction 7-aminomethyl-7-carbaguanine + 2 NADP(+) = 7-cyano-7-deazaguanine + 2 NADPH + 3 H(+). Its pathway is tRNA modification; tRNA-queuosine biosynthesis. Its function is as follows. Catalyzes the NADPH-dependent reduction of 7-cyano-7-deazaguanine (preQ0) to 7-aminomethyl-7-deazaguanine (preQ1). The sequence is that of NADPH-dependent 7-cyano-7-deazaguanine reductase from Methylobacillus flagellatus (strain ATCC 51484 / DSM 6875 / VKM B-1610 / KT).